Here is a 494-residue protein sequence, read N- to C-terminus: MFNYSGLNEECGVFGIWNHPEAAQLTYMGLHSLQHRGQEGAGIVVSDQNELKGERGLGLLTEAIKDDQMERLKGYQHAIGHVRYATSGNKGIENIQPFLYHFYDMSVGICHNGNLINAKSLRQNLEKQGAIFHSSSDTEVIMHLIRRSKAPTFEEALKESLRKVKGGFTFAILTKDALYGAVDPNAIRPLVVGKMKDGTYILASETCAIDVLGAEFVQDIHAGEYVVINDKGITVKSYTHHTTTAISAMEYIYFARPDSTIAGKNVHAVRKASGKKLAQESPVNADMVIGVPNSSLSAASGYAEEIGLPYEMGLVKNQYVARTFIQPTQELREQGVRVKLSAVKDIVDGKNIILVDDSIVRGTTIRRIVKMLKDSGANKVHVRIASPEFMFPSFYGIDVSTTAELISASKSPEEIKDYIGADSLAYLSVDGLIESIGLDYDAPYSGLCVESFTGDYPAGLYDYEANYKAHLSHRQKQYISKNKHFFDSEGNLNV.

The propeptide occupies 1–10; it reads MFNYSGLNEE. Catalysis depends on Cys11, which acts as the Nucleophile. One can recognise a Glutamine amidotransferase type-2 domain in the interval 11–231; it reads CGVFGIWNHP…AGEYVVINDK (221 aa). Positions 294, 356, and 357 each coordinate Mg(2+).

This sequence in the C-terminal section; belongs to the purine/pyrimidine phosphoribosyltransferase family. Requires Mg(2+) as cofactor.

The catalysed reaction is 5-phospho-beta-D-ribosylamine + L-glutamate + diphosphate = 5-phospho-alpha-D-ribose 1-diphosphate + L-glutamine + H2O. Its pathway is purine metabolism; IMP biosynthesis via de novo pathway; N(1)-(5-phospho-D-ribosyl)glycinamide from 5-phospho-alpha-D-ribose 1-diphosphate: step 1/2. Functionally, catalyzes the formation of phosphoribosylamine from phosphoribosylpyrophosphate (PRPP) and glutamine. This chain is Amidophosphoribosyltransferase, found in Staphylococcus aureus (strain COL).